We begin with the raw amino-acid sequence, 448 residues long: D-inositol 3-phosphate glycosyltransferase (448 aa).

1D-myo-inositol 3-phosphate is bound by residues histidine 35, 46–51 (DAGGLN), lysine 104, tyrosine 137, threonine 161, and arginine 181. Residue glycine 49 participates in UDP-N-acetyl-alpha-D-glucosamine binding. UDP-N-acetyl-alpha-D-glucosamine is bound by residues arginine 255, lysine 260, and methionine 321. Mg(2+)-binding residues include tyrosine 330, arginine 331, and alanine 333. Residues glutamate 343 and glutamate 351 each contribute to the UDP-N-acetyl-alpha-D-glucosamine site. Threonine 357 serves as a coordination point for Mg(2+).

Belongs to the glycosyltransferase group 1 family. MshA subfamily. As to quaternary structure, homodimer.

It carries out the reaction 1D-myo-inositol 3-phosphate + UDP-N-acetyl-alpha-D-glucosamine = 1D-myo-inositol 2-acetamido-2-deoxy-alpha-D-glucopyranoside 3-phosphate + UDP + H(+). Functionally, catalyzes the transfer of a N-acetyl-glucosamine moiety to 1D-myo-inositol 3-phosphate to produce 1D-myo-inositol 2-acetamido-2-deoxy-glucopyranoside 3-phosphate in the mycothiol biosynthesis pathway. The protein is D-inositol 3-phosphate glycosyltransferase of Acidothermus cellulolyticus (strain ATCC 43068 / DSM 8971 / 11B).